Reading from the N-terminus, the 271-residue chain is Exosome complex component Rrp42 (271 aa).

The protein belongs to the RNase PH family. Rrp42 subfamily. Component of the archaeal exosome complex. Forms a hexameric ring-like arrangement composed of 3 Rrp41-Rrp42 heterodimers. The hexameric ring associates with a trimer of Rrp4 and/or Csl4 subunits.

It is found in the cytoplasm. Functionally, non-catalytic component of the exosome, which is a complex involved in RNA degradation. Contributes to the structuring of the Rrp41 active site. The protein is Exosome complex component Rrp42 of Methanothermobacter thermautotrophicus (strain ATCC 29096 / DSM 1053 / JCM 10044 / NBRC 100330 / Delta H) (Methanobacterium thermoautotrophicum).